A 163-amino-acid polypeptide reads, in one-letter code: Retinoic acid receptor responder protein 2 (163 aa).

The first 20 residues, Met1 to Thr20, serve as a signal peptide directing secretion. Disulfide bonds link Cys79–Cys89, Cys100–Cys119, and Cys103–Cys135. A propeptide spanning residues Arg158–Lys163 is cleaved from the precursor.

In terms of processing, secreted in an inactive precursor form, prochemerin, which is proteolytically processed by a variety of extracellular proteases to generate forms with differing levels of bioactivity. For example, the removal of six amino acids results in chemerin-157, which exhibits the highest activity, while removal of seven amino acids results in chemerin-156 which has slightly less activity. Some proteases are able to cleave at more than one site and chemerin forms may be sequentially processed by different enzymes to modulate activity levels. The coordinated expression and activity of chemerin-modifying enzymes is essential for regulating its bioactivation, inactivation and, consequently, biological function. Cathepsin G cleaves seven C-terminal amino acids from prochemerin (chemerin-156), elastase is able to cleave six (chemerin-157), eight (chemerin-155) or eleven (chemerin-152), plasmin cleaves five amino acids (chemerin-158), and tryptase cleaves five (chemerin-158) or eight (chemerin-155). Multiple cleavages might be required to fully activate chemerin, with an initial tryptase cleavage resulting in chemerin with low activity (chemerin-158), and a second cleavage by carboxypeptidase N or B producing highly active chemerin (chemerin-157).

It is found in the secreted. In terms of biological role, adipocyte-secreted protein (adipokine) that regulates adipogenesis, metabolism and inflammation through activation of the chemokine-like receptor 1 (CMKLR1). Also acts as a ligand for CMKLR2. Can also bind to C-C chemokine receptor-like 2 (CCRL2), but with a lower affinity than it does to CMKLR1 or CMKLR2. Positively regulates adipocyte differentiation, modulates the expression of adipocyte genes involved in lipid and glucose metabolism and might play a role in angiogenesis, a process essential for the expansion of white adipose tissue. Also acts as a pro-inflammatory adipokine, causing an increase in secretion of pro-inflammatory and prodiabetic adipokines, which further impair adipose tissue metabolic function and have negative systemic effects including impaired insulin sensitivity, altered glucose and lipid metabolism, and a decrease in vascular function in other tissues. Can have both pro- and anti-inflammatory properties depending on the modality of enzymatic cleavage by different classes of proteases. Acts as a chemotactic factor for leukocyte populations expressing CMKLR1, particularly immature plasmacytoid dendritic cells, but also immature myeloid DCs, macrophages and natural killer cells. Exerts an anti-inflammatory role by preventing TNF/TNFA-induced VCAM1 expression and monocytes adhesion in vascular endothelial cells. The effect is mediated via inhibiting activation of NF-kappa-B and CRK/p38 through stimulation of AKT1/NOS3 signaling and nitric oxide production. Its dual role in inflammation and metabolism might provide a link Exhibits an antimicrobial function in the skin. This chain is Retinoic acid receptor responder protein 2 (RARRES2), found in Cricetulus griseus (Chinese hamster).